Reading from the N-terminus, the 244-residue chain is NH(3)-dependent NAD(+) synthetase (244 aa).

Residue 29–36 coordinates ATP; it reads GISGGIDS. D35 is a Mg(2+) binding site. R113 is a binding site for deamido-NAD(+). T133 is a binding site for ATP. E138 lines the Mg(2+) pocket. The deamido-NAD(+) site is built by K146 and D153. Positions 162 and 184 each coordinate ATP. Residue 230-231 participates in deamido-NAD(+) binding; the sequence is HK.

Belongs to the NAD synthetase family. In terms of assembly, homodimer.

The catalysed reaction is deamido-NAD(+) + NH4(+) + ATP = AMP + diphosphate + NAD(+) + H(+). Its pathway is cofactor biosynthesis; NAD(+) biosynthesis; NAD(+) from deamido-NAD(+) (ammonia route): step 1/1. In terms of biological role, catalyzes the ATP-dependent amidation of deamido-NAD to form NAD. Uses ammonia as a nitrogen source. In Mesoplasma florum (strain ATCC 33453 / NBRC 100688 / NCTC 11704 / L1) (Acholeplasma florum), this protein is NH(3)-dependent NAD(+) synthetase.